The chain runs to 248 residues: Probable transcriptional regulatory protein Rsph17025_0577 (248 aa).

The segment at 1 to 21 is disordered; that stretch reads MAGHSKWANIQHRKGKQDKLR.

It belongs to the TACO1 family.

It localises to the cytoplasm. The polypeptide is Probable transcriptional regulatory protein Rsph17025_0577 (Cereibacter sphaeroides (strain ATCC 17025 / ATH 2.4.3) (Rhodobacter sphaeroides)).